Reading from the N-terminus, the 626-residue chain is Janus kinase and microtubule-interacting protein 1 (626 aa).

Residues 1–22 form a disordered region; sequence MSKKGRSKGEKPEMETDAVQMA. Positions 1–365 are mediates association with microtubules; it reads MSKKGRSKGE…KIKNLTRENV (365 aa). Coiled coils occupy residues 19–255 and 284–413; these read VQMA…EAER and ERDV…DDLS. Residues 365 to 626 are mediates interaction with TYK2 and GABBR1; sequence VEMKEKLSAQ…ILFEPKLKFM (262 aa). S382 carries the post-translational modification Phosphoserine. Residues 452–461 show a composition bias toward polar residues; it reads ETLSETSYNT. Residues 452-477 form a disordered region; that stretch reads ETLSETSYNTDRTDRTPATPEEDLDD. Residue T470 is modified to Phosphothreonine. Positions 490–604 form a coiled coil; the sequence is QLTREYQALQ…EFRVLELEVR (115 aa).

The protein belongs to the JAKMIP family. Homodimer. Forms a complex with GABBR1 and KIF5B/kinesin-1. Interacts with JAK1 and TYK2. Predominantly expressed in neural tissues and lymphoid cells (at protein level). Isoform 2, isoform 3 and isoform 4 are specifically expressed in brain and retina. Isoform 1 and isoform 5 are also detected in liver, lung and skeletal muscle. Also detected in testis and to a lower extent spleen and intestine.

The protein resides in the cytoplasm. It is found in the cytoskeleton. Its subcellular location is the membrane. Its function is as follows. Associates with microtubules and may play a role in the microtubule-dependent transport of the GABA-B receptor. May play a role in JAK1 signaling and regulate microtubule cytoskeleton rearrangements. This chain is Janus kinase and microtubule-interacting protein 1 (JAKMIP1), found in Homo sapiens (Human).